The sequence spans 181 residues: MSSVIASRRYAYALLSAADEGGFLDDVTAEMEMIGETLAGSRDLVRVLASPLINGDRKTHILEEIFRGRVGERMMRFLSLIARKKRAGILRGIASEFKVLLDEKNGVVNADVTSATELSGEQAKELVNGLAAYTGKHVRARMTLDPEMIGGVSVQIGDTILDGSIRHQLQVLRRTLSVEEA.

Belongs to the ATPase delta chain family. F-type ATPases have 2 components, F(1) - the catalytic core - and F(0) - the membrane proton channel. F(1) has five subunits: alpha(3), beta(3), gamma(1), delta(1), epsilon(1). F(0) has three main subunits: a(1), b(2) and c(10-14). The alpha and beta chains form an alternating ring which encloses part of the gamma chain. F(1) is attached to F(0) by a central stalk formed by the gamma and epsilon chains, while a peripheral stalk is formed by the delta and b chains.

It is found in the cell inner membrane. Its function is as follows. F(1)F(0) ATP synthase produces ATP from ADP in the presence of a proton or sodium gradient. F-type ATPases consist of two structural domains, F(1) containing the extramembraneous catalytic core and F(0) containing the membrane proton channel, linked together by a central stalk and a peripheral stalk. During catalysis, ATP synthesis in the catalytic domain of F(1) is coupled via a rotary mechanism of the central stalk subunits to proton translocation. This protein is part of the stalk that links CF(0) to CF(1). It either transmits conformational changes from CF(0) to CF(1) or is implicated in proton conduction. In Chlorobium luteolum (strain DSM 273 / BCRC 81028 / 2530) (Pelodictyon luteolum), this protein is ATP synthase subunit delta.